The chain runs to 463 residues: Stress-activated protein kinase jnk-1 (463 aa).

Positions 1-12 (MEERLSTTSSYP) are enriched in polar residues. A disordered region spans residues 1–23 (MEERLSTTSSYPSHPGRSVEEDH). Residues 119 to 412 (YQNLRLIGSG…ISVDDALRHP (294 aa)) form the Protein kinase domain. Residues 126–131 (GSGAQG) and lysine 148 each bind ATP. Aspartate 244 (proton acceptor) is an active-site residue. A Phosphothreonine modification is found at threonine 276. The TXY motif lies at 276–278 (TPY). At tyrosine 278 the chain carries Phosphotyrosine.

It belongs to the protein kinase superfamily. CMGC Ser/Thr protein kinase family. MAP kinase subfamily. Binds to the scaffolding protein, unc-16. Unc-16 also binds other components of the JNK signaling pathway. Interacts with daf-16. Requires Mg(2+) as cofactor. Dually phosphorylated on Thr-276 and Tyr-278, which activates the enzyme. Expressed in most neurons, including nerve ring, head ganglions, dorsal and ventral nerve cords and tail ganglions. The Thr-276/Tyr-278 phosphorylated form is present in the nerve ring upon heat exposure.

Its subcellular location is the cytoplasm. The protein localises to the perikaryon. It localises to the cell projection. The protein resides in the axon. It carries out the reaction L-seryl-[protein] + ATP = O-phospho-L-seryl-[protein] + ADP + H(+). The catalysed reaction is L-threonyl-[protein] + ATP = O-phospho-L-threonyl-[protein] + ADP + H(+). With respect to regulation, activated by threonine and tyrosine phosphorylation by either of the dual specificity kinases, jkk-1 and mek-1. Serine/threonine-protein kinase which responds to activation by environmental stress by phosphorylating a number of transcription factors such as daf-16, and thus regulates transcriptional activity. By phosphorylating daf-16, plays a role in daf-16 nuclear translocation in intestinal cells in response to environmental stresses such as heat and oxidative stresses. Downstream of jkk-1, may coordinate locomotion via type-D GABAergic motoneurons and regulates synaptic vesicle transport in conjunction with unc-16. Independently of jkk-1, may regulate some mechanosensory responses, such as response to touch. Independently of jkk-1 and downstream of mek-1, plays a role in resistance to heavy metals, such as Cu(2+) or Cd(2+). Regulates germline cell apoptosis in response to heavy metals such as Cu(2+) and arsenite. Required for dopaminergic CEP neuron degeneration in response to Mn(2+). Required for normal sleep bout quantity and arousal thresholds during the transition from the last larval stage to adulthood in well-fed animals. Downstream of jkk-1 but independently of mek-1, positively regulates lifespan. This Caenorhabditis elegans protein is Stress-activated protein kinase jnk-1 (jnk-1).